Here is a 120-residue protein sequence, read N- to C-terminus: U-scoloptoxin(20)-Cw1a (120 aa).

An N-terminal signal peptide occupies residues 1–26 (MNSTDRLLGVLLAVVALILLIRISEA). Positions 87–106 (SSGKSLTTTKDSSESRKKEI) are disordered. Residues 97–106 (DSSESRKKEI) show a composition bias toward basic and acidic residues.

Belongs to the scoloptoxin-20 family. In terms of processing, contains 3 disulfide bonds. In terms of tissue distribution, expressed by the venom gland.

It localises to the secreted. The sequence is that of U-scoloptoxin(20)-Cw1a from Cormocephalus westwoodi (Westwood's green centipede).